We begin with the raw amino-acid sequence, 309 residues long: MTATDELTHNAGRYELSHLRALEAEAIHIIREVAAEFERPVLLFSGGKDSIVMLHLAVKAFRPGRLPFPVMHVDTGHNFDEVLQARDELVAETGVRLVVAKVQDDIDAGRVVETIPSRNPMQTFTLLRAIRENKFDAAFGGARRDEEKARAKERVFSFRDEFGQWDPKNQRPELWNLYNGRHRKGEHIRAFPLSNWTEFDIWSYIGAEQIKLPSIYYAHERKVFERDGMLLAVHKYLQPRKDEPIIEKTVRFRTVGDVTCTGCVESTAATVSEVIAETAISRLTERGATRADDRISEAGMEDRKREGYF.

Belongs to the PAPS reductase family. CysD subfamily. In terms of assembly, heterodimer composed of CysD, the smaller subunit, and CysN.

It catalyses the reaction sulfate + ATP + H(+) = adenosine 5'-phosphosulfate + diphosphate. It participates in sulfur metabolism; hydrogen sulfide biosynthesis; sulfite from sulfate: step 1/3. With CysN forms the ATP sulfurylase (ATPS) that catalyzes the adenylation of sulfate producing adenosine 5'-phosphosulfate (APS) and diphosphate, the first enzymatic step in sulfur assimilation pathway. APS synthesis involves the formation of a high-energy phosphoric-sulfuric acid anhydride bond driven by GTP hydrolysis by CysN coupled to ATP hydrolysis by CysD. This Mycolicibacterium gilvum (strain PYR-GCK) (Mycobacterium gilvum (strain PYR-GCK)) protein is Sulfate adenylyltransferase subunit 2.